A 193-amino-acid chain; its full sequence is Penicillin-binding protein activator LpoB (193 aa).

An N-terminal signal peptide occupies residues 1-16; it reads MKKMLFVVAAVFLLAG. Cys-17 carries the N-palmitoyl cysteine lipid modification. Cys-17 carries the S-diacylglycerol cysteine lipid modification. Residues 23-50 form a disordered region; it reads QQPPAPVEPVTPTEPTEPPKPIEPPIEV. Residues 37–46 show a composition bias toward pro residues; it reads PTEPPKPIEP.

The protein belongs to the LpoB family. In terms of assembly, interacts with PBP1b.

The protein resides in the cell outer membrane. Functionally, regulator of peptidoglycan synthesis that is essential for the function of penicillin-binding protein 1B (PBP1b). The chain is Penicillin-binding protein activator LpoB from Proteus mirabilis (strain HI4320).